We begin with the raw amino-acid sequence, 115 residues long: uncharacterized protein (115 aa).

This is an uncharacterized protein from Acidianus convivator (ATV).